Reading from the N-terminus, the 267-residue chain is Large ribosomal subunit protein uL4 (267 aa).

Belongs to the universal ribosomal protein uL4 family. As to quaternary structure, part of the 50S ribosomal subunit.

Its function is as follows. One of the primary rRNA binding proteins, this protein initially binds near the 5'-end of the 23S rRNA. It is important during the early stages of 50S assembly. It makes multiple contacts with different domains of the 23S rRNA in the assembled 50S subunit and ribosome. In terms of biological role, forms part of the polypeptide exit tunnel. In Saccharolobus islandicus (strain Y.N.15.51 / Yellowstone #2) (Sulfolobus islandicus), this protein is Large ribosomal subunit protein uL4.